The sequence spans 133 residues: Nucleoside diphosphate kinase (133 aa).

Positions 9, 57, 85, 91, 102, and 112 each coordinate ATP. His115 acts as the Pros-phosphohistidine intermediate in catalysis.

This sequence belongs to the NDK family. Mg(2+) is required as a cofactor.

The protein localises to the cytoplasm. The enzyme catalyses a 2'-deoxyribonucleoside 5'-diphosphate + ATP = a 2'-deoxyribonucleoside 5'-triphosphate + ADP. It catalyses the reaction a ribonucleoside 5'-diphosphate + ATP = a ribonucleoside 5'-triphosphate + ADP. Its function is as follows. Major role in the synthesis of nucleoside triphosphates other than ATP. The ATP gamma phosphate is transferred to the NDP beta phosphate via a ping-pong mechanism, using a phosphorylated active-site intermediate. The protein is Nucleoside diphosphate kinase of Methanococcus maripaludis (strain DSM 14266 / JCM 13030 / NBRC 101832 / S2 / LL).